Here is a 159-residue protein sequence, read N- to C-terminus: Cytochrome c-type biogenesis protein CcmE (159 aa).

Topologically, residues 1–8 (MNLRRKNR) are cytoplasmic. The chain crosses the membrane as a helical; Signal-anchor for type II membrane protein span at residues 9-29 (LWVVCAVLAGLGLTTALVLYA). The Periplasmic segment spans residues 30-159 (LRANIDLFYT…PQRADKDTSS (130 aa)). Residues 129 to 159 (KHDENYTPPEVEKAMQENHRRPQRADKDTSS) are disordered. 2 residues coordinate heme: His-130 and Tyr-134.

This sequence belongs to the CcmE/CycJ family.

Its subcellular location is the cell inner membrane. Functionally, heme chaperone required for the biogenesis of c-type cytochromes. Transiently binds heme delivered by CcmC and transfers the heme to apo-cytochromes in a process facilitated by CcmF and CcmH. In Salmonella typhimurium (strain LT2 / SGSC1412 / ATCC 700720), this protein is Cytochrome c-type biogenesis protein CcmE.